The chain runs to 519 residues: F-box-like/WD repeat-containing protein TBL1XR1-A (519 aa).

Positions 4-36 (SSDEVNFLVYRYLQESGFSHSAFTFGIESHISQ) constitute a LisH domain. Positions 41 to 86 (GALAPPAALISIIQKGLQYVEAEVSINEDGTLFDGRPIESLSLIDA) constitute an F-box-like domain. Over residues 115-139 (AAAAAATPNNQQPPAKNGENTANGE) the composition is skewed to low complexity. The segment at 115-147 (AAAAAATPNNQQPPAKNGENTANGEENGGHALA) is disordered. 8 WD repeats span residues 172-211 (GHESEVFICAWNPVSDLLASGSGDSTARIWNLSENSTSGS), 228-267 (PSNKDVTSLDWNSEGTLLATGSYDGFARIWTKDGNLASTL), 269-308 (QHKGPIFALKWNKKGNFILSAGVDKTTIIWDAHTGEAKQQ), 311-349 (FHSAPALDVDWQSNNTFASCSTDMCIHVCKLGQDRPIKT), 352-391 (GHTNEVNAIKWDPTGNLLASCSDDMTLKIWSMKHDTCVHD), 394-442 (AHNK…CIHT), 445-484 (KHQEPVYSVAFSPDGRYLASGSFDKCVHIWNTQTGALVHS), and 486-519 (RGTGGIFEVCWNAAGDKVGASASDGSVCVLDLRK).

Belongs to the WD repeat EBI family. In terms of assembly, interacts with heterodimers of rxra and thrb, and this interaction is abrogated by thyroid hormone binding to thrb. Interacts with ncor1.

It localises to the nucleus. In terms of biological role, F-box-like protein which acts as an integral component of the N-CoR transcriptional corepressor complex. Probably regulates transcription activation mediated by nuclear receptors. May mediate the recruitment of the 19S proteasome complex, leading to the subsequent proteasomal degradation of the N-CoR complex, thereby allowing cofactor exchange and transcription activation. This chain is F-box-like/WD repeat-containing protein TBL1XR1-A (tbl1xr1-a), found in Xenopus laevis (African clawed frog).